A 651-amino-acid polypeptide reads, in one-letter code: Mediator of RNA polymerase II transcription subunit 17 (651 aa).

The segment at 51 to 83 is disordered; the sequence is QGSGSEEEEAAGAEGDAQDWAGAGSSADQDDEE. The span at 62–74 shows a compositional bias: low complexity; sequence GAEGDAQDWAGAG.

Belongs to the Mediator complex subunit 17 family. Component of the Mediator complex, which is composed of MED1, MED4, MED6, MED7, MED8, MED9, MED10, MED11, MED12, MED13, MED13L, MED14, MED15, MED16, MED17, MED18, MED19, MED20, MED21, MED22, MED23, MED24, MED25, MED26, MED27, MED29, MED30, MED31, CCNC, CDK8 and CDC2L6/CDK11. The MED12, MED13, CCNC and CDK8 subunits form a distinct module termed the CDK8 module. Mediator containing the CDK8 module is less active than Mediator lacking this module in supporting transcriptional activation. Individual preparations of the Mediator complex lacking one or more distinct subunits have been variously termed ARC, CRSP, DRIP, PC2, SMCC and TRAP. Interacts with GATA1, PPARG and STAT2.

The protein resides in the nucleus. Functionally, component of the Mediator complex, a coactivator involved in the regulated transcription of nearly all RNA polymerase II-dependent genes. Mediator functions as a bridge to convey information from gene-specific regulatory proteins to the basal RNA polymerase II transcription machinery. Mediator is recruited to promoters by direct interactions with regulatory proteins and serves as a scaffold for the assembly of a functional preinitiation complex with RNA polymerase II and the general transcription factors. The protein is Mediator of RNA polymerase II transcription subunit 17 (MED17) of Bos taurus (Bovine).